The following is a 229-amino-acid chain: Enolase-phosphatase E1 (229 aa).

2 residues coordinate Mg(2+): Asp-7 and Glu-9. Substrate is bound by residues 122 to 123 (SS) and Lys-161. Asp-186 contacts Mg(2+).

The protein belongs to the HAD-like hydrolase superfamily. MasA/MtnC family. As to quaternary structure, monomer. The cofactor is Mg(2+).

The protein resides in the cytoplasm. It localises to the nucleus. The catalysed reaction is 5-methylsulfanyl-2,3-dioxopentyl phosphate + H2O = 1,2-dihydroxy-5-(methylsulfanyl)pent-1-en-3-one + phosphate. It participates in amino-acid biosynthesis; L-methionine biosynthesis via salvage pathway; L-methionine from S-methyl-5-thio-alpha-D-ribose 1-phosphate: step 3/6. Its pathway is amino-acid biosynthesis; L-methionine biosynthesis via salvage pathway; L-methionine from S-methyl-5-thio-alpha-D-ribose 1-phosphate: step 4/6. In terms of biological role, bifunctional enzyme that catalyzes the enolization of 2,3-diketo-5-methylthiopentyl-1-phosphate (DK-MTP-1-P) into the intermediate 2-hydroxy-3-keto-5-methylthiopentenyl-1-phosphate (HK-MTPenyl-1-P), which is then dephosphorylated to form the acireductone 1,2-dihydroxy-3-keto-5-methylthiopentene (DHK-MTPene). The polypeptide is Enolase-phosphatase E1 (Clavispora lusitaniae (strain ATCC 42720) (Yeast)).